Consider the following 447-residue polypeptide: GTPase Der (447 aa).

2 EngA-type G domains span residues 3-167 (PVVA…HLED) and 180-353 (IKLA…KAAN). Residues 9 to 16 (GRPNVGKS), 56 to 60 (DTGGF), 119 to 122 (NKAE), 186 to 193 (GRPNVGKS), 233 to 237 (DTAGL), and 298 to 301 (NKWD) each bind GTP. Residues 354–438 (CKMSTPILTR…PMRIEFKSST (85 aa)) enclose the KH-like domain.

Belongs to the TRAFAC class TrmE-Era-EngA-EngB-Septin-like GTPase superfamily. EngA (Der) GTPase family. As to quaternary structure, associates with the 50S ribosomal subunit.

In terms of biological role, GTPase that plays an essential role in the late steps of ribosome biogenesis. The sequence is that of GTPase Der from Albidiferax ferrireducens (strain ATCC BAA-621 / DSM 15236 / T118) (Rhodoferax ferrireducens).